A 218-amino-acid chain; its full sequence is MARKGILGTKLGMTQVFDENNKVVPVTVVKAGPNVVTRIRTTERDGYSAVQLAYGEISPRKVNKPVTGQFAAAGVNPRRHLAELRLADNEDAGALYEVGQELTAEIFADGAYVDVTGTSKGKGFAGTMKRHGFKGQGASHGAQAVHRRPGSIGGCATPGRVFKGTRMSGRMGSDRVTTQNLKVHKVDAENGVLLIKGAIPGRNGGLVVVRSAIKRGEK.

Belongs to the universal ribosomal protein uL3 family. As to quaternary structure, part of the 50S ribosomal subunit. Forms a cluster with proteins L14 and L19.

In terms of biological role, one of the primary rRNA binding proteins, it binds directly near the 3'-end of the 23S rRNA, where it nucleates assembly of the 50S subunit. In Mycolicibacterium gilvum (strain PYR-GCK) (Mycobacterium gilvum (strain PYR-GCK)), this protein is Large ribosomal subunit protein uL3.